The primary structure comprises 489 residues: DNA-dependent metalloprotease SPRTN (489 aa).

Methionine 1 carries the post-translational modification N-acetylmethionine. In terms of domain architecture, SprT-like spans 45–212 (LQALFVQFND…KTCGGTYIKI (168 aa)). Histidine 111 lines the Zn(2+) pocket. Residue glutamate 112 is part of the active site. Positions 115 and 130 each coordinate Zn(2+). Residue lysine 230 is modified to N6-acetyllysine. An SHP-box motif is present at residues 253–261 (FSGKGYVLG). The residue at position 268 (serine 268) is a Phosphoserine. A Glycyl lysine isopeptide (Lys-Gly) (interchain with G-Cter in SUMO2) cross-link involves residue lysine 303. Residues 325–332 (QNVLSNYF) carry the PIP-box motif. A Glycyl lysine isopeptide (Lys-Gly) (interchain with G-Cter in SUMO2); alternate cross-link involves residue lysine 341. Residue lysine 341 forms a Glycyl lysine isopeptide (Lys-Gly) (interchain with G-Cter in ubiquitin); alternate linkage. The interval 357 to 409 (GNIPKNSVSSSSQRRVSSSKISLRNSSKVTESASVMPSQDVSGSEDTFPNKRP) is disordered. Lysine 361 participates in a covalent cross-link: Glycyl lysine isopeptide (Lys-Gly) (interchain with G-Cter in SUMO2). Residues 363-383 (SVSSSSQRRVSSSKISLRNSS) are compositionally biased toward low complexity. Residues serine 373 and serine 374 each carry the phosphoserine; by CHEK1 modification. Residue lysine 376 forms a Glycyl lysine isopeptide (Lys-Gly) (interchain with G-Cter in SUMO2); alternate linkage. A Glycyl lysine isopeptide (Lys-Gly) (interchain with G-Cter in ubiquitin); alternate cross-link involves residue lysine 376. Serine 383 is modified (phosphoserine; by CHEK1). Positions 384–403 (KVTESASVMPSQDVSGSEDT) are enriched in polar residues. The Nuclear localization signal motif lies at 402-413 (DTFPNKRPRLED). Residue lysine 414 forms a Glycyl lysine isopeptide (Lys-Gly) (interchain with G-Cter in ubiquitin) linkage. Glycyl lysine isopeptide (Lys-Gly) (interchain with G-Cter in SUMO2) cross-links involve residues lysine 423 and lysine 424. The interval 428 to 453 (KSSGNDPKYSTTTAQNSSSSSSQSKM) is disordered. A Glycyl lysine isopeptide (Lys-Gly) (interchain with G-Cter in ubiquitin) cross-link involves residue lysine 435. Over residues 437-451 (STTTAQNSSSSSSQS) the composition is skewed to low complexity. The segment at 453-480 (MVNCPVCQNEVLESQINEHLDWCLEGDS) adopts a UBZ4-type zinc-finger fold. Zn(2+) contacts are provided by cysteine 456, cysteine 459, histidine 471, and cysteine 475. Lysine 484 is covalently cross-linked (Glycyl lysine isopeptide (Lys-Gly) (interchain with G-Cter in SUMO2)).

Belongs to the Spartan family. Homodimer. Interacts (VIA PIP-box) with PCNA (when ubiquitinated). Interacts (via its SHP-box) with VCP/p97. Interacts with RAD18. Interacts with KCTD13 and POLD3. It depends on Zn(2+) as a cofactor. In terms of processing, autocatalytically cleaved in response to double-stranded DNA-binding: autocatalytic cleavage takes place in trans and leads to inactivation. Monoubiquitinated; monoubiquitination promotes exclusion from chromatin. Deubiquitinated by VCPIP1: deubiquitination is required for subsequent acetylation and recruitment to chromatin and DNA damage sites. Post-translationally, acetylated following deubiquitination by VCPIP1, leading to recruitment to chromatin and DNA damage sites. In terms of processing, phosphorylation by CHEK1 promotes recruitment to chromatin.

It localises to the nucleus. Its subcellular location is the chromosome. With respect to regulation, DNA-binding activates the protease activity: single-stranded DNA-binding specifically activates ability to cleave covalent DNA-protein cross-links (DPCs). In contrast, double-stranded DNA-binding specifically activates autocatalytic cleavage, and subsequent inactivation. In terms of biological role, DNA-dependent metalloendopeptidase that mediates the proteolytic cleavage of covalent DNA-protein cross-links (DPCs) during DNA synthesis, thereby playing a key role in maintaining genomic integrity. DPCs are highly toxic DNA lesions that interfere with essential chromatin transactions, such as replication and transcription, and which are induced by reactive agents, such as UV light or formaldehyde. Associates with the DNA replication machinery and specifically removes DPCs during DNA synthesis. Catalyzes proteolytic cleavage of the HMCES DNA-protein cross-link following unfolding by the BRIP1/FANCJ helicase. Acts as a pleiotropic protease for DNA-binding proteins cross-linked with DNA, such as TOP1, TOP2A, histones H3 and H4. Mediates degradation of DPCs that are not ubiquitinated, while it is not able to degrade ubiquitinated DPCs. SPRTN activation requires polymerase collision with DPCs followed by helicase bypass of DPCs. Involved in recruitment of VCP/p97 to sites of DNA damage. Also acts as an activator of CHEK1 during normal DNA replication by mediating proteolytic cleavage of CHEK1, thereby promoting CHEK1 removal from chromatin and subsequent activation. Does not activate CHEK1 in response to DNA damage. May also act as a 'reader' of ubiquitinated PCNA: recruited to sites of UV damage and interacts with ubiquitinated PCNA and RAD18, the E3 ubiquitin ligase that monoubiquitinates PCNA. Facilitates chromatin association of RAD18 and is required for efficient PCNA monoubiquitination, promoting a feed-forward loop to enhance PCNA ubiquitination and translesion DNA synthesis. In Homo sapiens (Human), this protein is DNA-dependent metalloprotease SPRTN.